The chain runs to 227 residues: Orotidine 5'-phosphate decarboxylase (227 aa).

Substrate contacts are provided by residues Asp8, Lys30, 59–68, Thr118, Arg178, Gln187, Gly207, and Arg208; that span reads DLKLYDIPNT. The Proton donor role is filled by Lys61.

It belongs to the OMP decarboxylase family. Type 1 subfamily. In terms of assembly, homodimer.

It catalyses the reaction orotidine 5'-phosphate + H(+) = UMP + CO2. It functions in the pathway pyrimidine metabolism; UMP biosynthesis via de novo pathway; UMP from orotate: step 2/2. Catalyzes the decarboxylation of orotidine 5'-monophosphate (OMP) to uridine 5'-monophosphate (UMP). The sequence is that of Orotidine 5'-phosphate decarboxylase from Nitratiruptor sp. (strain SB155-2).